The following is a 78-amino-acid chain: D-alanyl carrier protein (78 aa).

One can recognise a Carrier domain in the interval 1 to 78 (MNIQETVLNI…QIIQQVEALQ (78 aa)). Residue Ser36 is modified to O-(pantetheine 4'-phosphoryl)serine.

The protein belongs to the DltC family. Post-translationally, 4'-phosphopantetheine is transferred from CoA to a specific serine of apo-DCP.

It localises to the cytoplasm. The protein operates within cell wall biogenesis; lipoteichoic acid biosynthesis. Its function is as follows. Carrier protein involved in the D-alanylation of lipoteichoic acid (LTA). The loading of thioester-linked D-alanine onto DltC is catalyzed by D-alanine--D-alanyl carrier protein ligase DltA. The DltC-carried D-alanyl group is further transferred to cell membrane phosphatidylglycerol (PG) by forming an ester bond, probably catalyzed by DltD. D-alanylation of LTA plays an important role in modulating the properties of the cell wall in Gram-positive bacteria, influencing the net charge of the cell wall. The protein is D-alanyl carrier protein of Enterococcus faecalis (strain ATCC 700802 / V583).